A 220-amino-acid chain; its full sequence is Uracil phosphoribosyltransferase 2 (220 aa).

GTP is bound at residue 77–80 (ARDI). Positions 87 and 113 each coordinate 5-phospho-alpha-D-ribose 1-diphosphate. Arginine 134 is a GTP binding site. 5-phospho-alpha-D-ribose 1-diphosphate is bound by residues aspartate 140 and 140–148 (DPLLATGNS). Tyrosine 204 contributes to the D-ribose 5-phosphate binding site. Uracil is bound by residues valine 205 and 210 to 212 (GDF). Aspartate 211 serves as a coordination point for 5-phospho-alpha-D-ribose 1-diphosphate.

It belongs to the UPRTase family. Requires Mg(2+) as cofactor.

The catalysed reaction is UMP + diphosphate = 5-phospho-alpha-D-ribose 1-diphosphate + uracil. It participates in pyrimidine metabolism; UMP biosynthesis via salvage pathway; UMP from uracil: step 1/1. Allosterically activated by GTP. Catalyzes the conversion of uracil and 5-phospho-alpha-D-ribose 1-diphosphate (PRPP) to UMP and diphosphate. This is Uracil phosphoribosyltransferase 2 from Schizosaccharomyces pombe (strain 972 / ATCC 24843) (Fission yeast).